A 440-amino-acid polypeptide reads, in one-letter code: Protein disulfide-isomerase A6 homolog (440 aa).

A signal peptide spans 1 to 18 (MALIKLLLASLAITSVCG). Thioredoxin domains follow at residues 19–131 (MYSK…AEAK) and 127–273 (LAEA…ARAQ). Active-site nucleophile residues include C54 and C57. The cysteines at positions 54 and 57 are disulfide-linked. The disordered stretch occupies residues 138-164 (LGGKSSGSSSSGSGSGSGKRGGGGSGN). The span at 139 to 149 (GGKSSGSSSSG) shows a compositional bias: low complexity. A compositionally biased stretch (gly residues) spans 150–163 (SGSGSGKRGGGGSG). Residues C194 and C197 each act as nucleophile in the active site. A disulfide bridge links C194 with C197. Positions 404-426 (DGFPKIQKTEKWDGKDGALPAED) are disordered. Positions 410–419 (QKTEKWDGKD) are enriched in basic and acidic residues. The Prevents secretion from ER signature appears at 437–440 (KTEL).

It belongs to the protein disulfide isomerase family.

The protein resides in the endoplasmic reticulum lumen. It carries out the reaction Catalyzes the rearrangement of -S-S- bonds in proteins.. May function as a chaperone that inhibits aggregation of misfolded proteins. May negatively regulate the unfolded protein response (UPR) through binding to UPR sensors. This chain is Protein disulfide-isomerase A6 homolog, found in Caenorhabditis elegans.